The chain runs to 162 residues: NADH-quinone oxidoreductase subunit I (162 aa).

2 consecutive 4Fe-4S ferredoxin-type domains span residues 54 to 83 (RRYE…INST) and 93 to 122 (SSYE…ETNI). 8 residues coordinate [4Fe-4S] cluster: Cys63, Cys66, Cys69, Cys73, Cys102, Cys105, Cys108, and Cys112.

It belongs to the complex I 23 kDa subunit family. In terms of assembly, NDH-1 is composed of 14 different subunits. Subunits NuoA, H, J, K, L, M, N constitute the membrane sector of the complex. [4Fe-4S] cluster is required as a cofactor.

The protein resides in the cell inner membrane. It carries out the reaction a quinone + NADH + 5 H(+)(in) = a quinol + NAD(+) + 4 H(+)(out). NDH-1 shuttles electrons from NADH, via FMN and iron-sulfur (Fe-S) centers, to quinones in the respiratory chain. The immediate electron acceptor for the enzyme in this species is believed to be ubiquinone. Couples the redox reaction to proton translocation (for every two electrons transferred, four hydrogen ions are translocated across the cytoplasmic membrane), and thus conserves the redox energy in a proton gradient. The protein is NADH-quinone oxidoreductase subunit I of Francisella tularensis subsp. tularensis (strain FSC 198).